The following is a 135-amino-acid chain: UPF0225 protein CV_3559 (135 aa).

It belongs to the UPF0225 family.

The sequence is that of UPF0225 protein CV_3559 from Chromobacterium violaceum (strain ATCC 12472 / DSM 30191 / JCM 1249 / CCUG 213 / NBRC 12614 / NCIMB 9131 / NCTC 9757 / MK).